Consider the following 460-residue polypeptide: V-type ATP synthase beta chain (460 aa).

The protein belongs to the ATPase alpha/beta chains family.

Functionally, produces ATP from ADP in the presence of a proton gradient across the membrane. The V-type beta chain is a regulatory subunit. This is V-type ATP synthase beta chain from Thermotoga neapolitana (strain ATCC 49049 / DSM 4359 / NBRC 107923 / NS-E).